Consider the following 522-residue polypeptide: Apolipoprotein N-acyltransferase (522 aa).

A run of 6 helical transmembrane segments spans residues 17-37, 61-81, 98-118, 127-147, 164-184, and 197-217; these read YFTY…FSPF, TALL…VSWL, FLVG…TYLV, VIFA…FTGF, IAPI…SAVI, and LKLV…SAYS. Residues 236-483 enclose the CN hydrolase domain; sequence AQGNIEQNLK…ETTLTYKIAP (248 aa). Glu276 functions as the Proton acceptor in the catalytic mechanism. The active site involves Lys342. The active-site Nucleophile is the Cys394. The chain crosses the membrane as a helical span at residues 495-515; sequence NMPLYALSLLFLLLHSMMAFI.

Belongs to the CN hydrolase family. Apolipoprotein N-acyltransferase subfamily.

The protein localises to the cell inner membrane. The enzyme catalyses N-terminal S-1,2-diacyl-sn-glyceryl-L-cysteinyl-[lipoprotein] + a glycerophospholipid = N-acyl-S-1,2-diacyl-sn-glyceryl-L-cysteinyl-[lipoprotein] + a 2-acyl-sn-glycero-3-phospholipid + H(+). It participates in protein modification; lipoprotein biosynthesis (N-acyl transfer). Its function is as follows. Catalyzes the phospholipid dependent N-acylation of the N-terminal cysteine of apolipoprotein, the last step in lipoprotein maturation. The polypeptide is Apolipoprotein N-acyltransferase (Haemophilus influenzae (strain ATCC 51907 / DSM 11121 / KW20 / Rd)).